The following is a 465-amino-acid chain: Glycine--tRNA ligase (465 aa).

Arg98 and Glu174 together coordinate substrate. Residues 206 to 208, 216 to 221, 290 to 291, and 334 to 337 contribute to the ATP site; these read RNE, FRTREF, EL, and GADR. 221-225 serves as a coordination point for substrate; the sequence is FEQME. 330–334 is a substrate binding site; sequence EPSLG.

The protein belongs to the class-II aminoacyl-tRNA synthetase family. In terms of assembly, homodimer.

Its subcellular location is the cytoplasm. It carries out the reaction tRNA(Gly) + glycine + ATP = glycyl-tRNA(Gly) + AMP + diphosphate. Its function is as follows. Catalyzes the attachment of glycine to tRNA(Gly). The protein is Glycine--tRNA ligase of Agathobacter rectalis (strain ATCC 33656 / DSM 3377 / JCM 17463 / KCTC 5835 / VPI 0990) (Eubacterium rectale).